The chain runs to 95 residues: Progonadoliberin-1 (95 aa).

A signal peptide spans 1-25 (MAPQTSNLWILLLLVVVMMMSQGCC). Pyrrolidone carboxylic acid is present on Gln26. A Glycine amide modification is found at Gly35.

Belongs to the GnRH family.

The protein resides in the secreted. Functionally, stimulates the secretion of gonadotropins. This is Progonadoliberin-1 (gnrh1) from Sparus aurata (Gilthead sea bream).